Here is a 638-residue protein sequence, read N- to C-terminus: Glucans biosynthesis glucosyltransferase H (638 aa).

The next 6 membrane-spanning stretches (helical) occupy residues 60-82 (FYLIGGTMAMSLIATWVMLAVMW), 97-119 (FMFLFAWVTMSFASALAGFFCVV), 415-437 (IGHYFTAPMWGLLMLVGIAIPLV), 464-486 (LWIFTFTMFVLLAPKLLAYFALL), 499-521 (LRVLLSILLESILAALMAPVVMY), and 578-600 (LAMWMSPVVLGMAFSVPVVALTS).

It belongs to the glycosyltransferase 2 family. OpgH subfamily.

It localises to the cell inner membrane. The protein operates within glycan metabolism; osmoregulated periplasmic glucan (OPG) biosynthesis. Its function is as follows. Involved in the biosynthesis of osmoregulated periplasmic glucans (OPGs). The chain is Glucans biosynthesis glucosyltransferase H from Xylella fastidiosa (strain 9a5c).